Reading from the N-terminus, the 362-residue chain is GTP 3',8-cyclase (362 aa).

The Radical SAM core domain maps to 8–228 (SLGRPLRDLR…ARISSHWPID (221 aa)). GTP is bound at residue Arg-17. Positions 24 and 28 each coordinate [4Fe-4S] cluster. Tyr-30 is a binding site for S-adenosyl-L-methionine. Cys-31 is a [4Fe-4S] cluster binding site. A GTP-binding site is contributed by Arg-71. Gly-75 serves as a coordination point for S-adenosyl-L-methionine. GTP is bound at residue Thr-102. Ser-126 serves as a coordination point for S-adenosyl-L-methionine. Residue Lys-164 coordinates GTP. Residue Met-198 coordinates S-adenosyl-L-methionine. Residues Cys-262 and Cys-265 each contribute to the [4Fe-4S] cluster site. Residue 267–269 (RLR) coordinates GTP. Cys-279 is a [4Fe-4S] cluster binding site. Positions 325–362 (ALDSDGSREDADESEASAVPGRSTHPGHRKVEMSYIGG) are disordered.

The protein belongs to the radical SAM superfamily. MoaA family. Monomer and homodimer. [4Fe-4S] cluster is required as a cofactor.

The enzyme catalyses GTP + AH2 + S-adenosyl-L-methionine = (8S)-3',8-cyclo-7,8-dihydroguanosine 5'-triphosphate + 5'-deoxyadenosine + L-methionine + A + H(+). It participates in cofactor biosynthesis; molybdopterin biosynthesis. Catalyzes the cyclization of GTP to (8S)-3',8-cyclo-7,8-dihydroguanosine 5'-triphosphate. The protein is GTP 3',8-cyclase of Acidothermus cellulolyticus (strain ATCC 43068 / DSM 8971 / 11B).